Here is a 475-residue protein sequence, read N- to C-terminus: ATP synthase subunit beta (475 aa).

152 to 159 (GGAGVGKT) is a binding site for ATP.

This sequence belongs to the ATPase alpha/beta chains family. In terms of assembly, F-type ATPases have 2 components, CF(1) - the catalytic core - and CF(0) - the membrane proton channel. CF(1) has five subunits: alpha(3), beta(3), gamma(1), delta(1), epsilon(1). CF(0) has four main subunits: a(1), b(1), b'(1) and c(9-12).

The protein localises to the cell inner membrane. The catalysed reaction is ATP + H2O + 4 H(+)(in) = ADP + phosphate + 5 H(+)(out). Functionally, produces ATP from ADP in the presence of a proton gradient across the membrane. The catalytic sites are hosted primarily by the beta subunits. The sequence is that of ATP synthase subunit beta from Cereibacter sphaeroides (strain ATCC 17025 / ATH 2.4.3) (Rhodobacter sphaeroides).